The primary structure comprises 460 residues: MAQQEASPSPGAEVVGRAFVEQYYHILHQSPGLVHRFYQDSSFLTRPDVTGAVTTVTTMQAINDKILSLKYEDYTAEIETADAQESHERGVIVLVTGRLTGNDNVRKKFSQSFFLAPQDKGYFVLNDVFRFLEEKEVTAQARSVPINGTTRDVQAPIEPERVVVSHEPEVEPEPVASIEEEDLDNVAEVYDPSDKDEGVVVDVEPIEPPTQISHNEILSVPQGDAPKHSYASILKQMKSSPAPTTHVARNKPRPAPVNQKLTAPPAEPAARPEASAHENVPNSSHVDVEDDGHSIYVRNLPFDSTPTQLEEVFKNFGAIKHEGIQVRSNKQQGFCFGFVEFETSSGKQSALEASPVTIGDRQAVVEEKKTNSRGGGNNGGSRGRYFSGRGSFRNESFKGGRGGGGRGGYGRGGGEFSGRPKSSNPRNGGEGYQRVPQNGGGGRGGRGEGGRGGARGGGSS.

Residues 15-131 (VGRAFVEQYY…YFVLNDVFRF (117 aa)) enclose the NTF2 domain. Disordered regions lie at residues 207–226 (EPPT…GDAP), 238–289 (KSSP…VDVE), and 361–460 (RQAV…GGSS). One can recognise an RRM domain in the interval 293–370 (HSIYVRNLPF…RQAVVEEKKT (78 aa)). Gly residues predominate over residues 373–382 (RGGGNNGGSR). Low complexity predominate over residues 383 to 394 (GRYFSGRGSFRN). 2 stretches are compositionally biased toward gly residues: residues 399-416 (GGRG…GGEF) and 450-460 (GRGGARGGGSS).

Interacts with MBD6.

It is found in the cytoplasm. It localises to the nucleus. Its function is as follows. Involved in RNA-directed DNA methylation (RdDM). This is Nuclear transport factor 2 from Arabidopsis thaliana (Mouse-ear cress).